The chain runs to 413 residues: CinA-like protein (413 aa).

This sequence belongs to the CinA family.

The polypeptide is CinA-like protein (Geobacter sulfurreducens (strain ATCC 51573 / DSM 12127 / PCA)).